Reading from the N-terminus, the 118-residue chain is Large ribosomal subunit protein uL18 (118 aa).

It belongs to the universal ribosomal protein uL18 family. As to quaternary structure, part of the 50S ribosomal subunit; part of the 5S rRNA/L5/L18/L25 subcomplex. Contacts the 5S and 23S rRNAs.

Its function is as follows. This is one of the proteins that bind and probably mediate the attachment of the 5S RNA into the large ribosomal subunit, where it forms part of the central protuberance. The polypeptide is Large ribosomal subunit protein uL18 (Sulfurimonas denitrificans (strain ATCC 33889 / DSM 1251) (Thiomicrospira denitrificans (strain ATCC 33889 / DSM 1251))).